The primary structure comprises 45 residues: uncharacterized protein (45 aa).

Residues 18–45 (RRGRIGVQPSPERRSEVVGPFPLARSLS) are disordered.

This is an uncharacterized protein from Homo sapiens (Human).